The chain runs to 470 residues: MDYLPIFVELKGRLVLLVGGGEVAARKATLLLRAGALLQVVAPELCSELQQRYQAGELEWYQGEFQPEYLDGIFLVIAATDDRILNHQVFSEADKRSILVNVVDDQVHCSFIFPSIIDRSPVLVAISSAGKAPVLARLIREKLEALLPSSLGTMAKIAGKWRERVKQRLTSMRQRRSFWEQAFNGRFAMLVANGQIQQAEKQLEQQLEQSDLQGELALVGAGPGDPGLLTLKGLQVIQQADVVLYDHLVSSDVLDLIRRDADKICVGKRAGNHSVSQEETNRLIVKFARQGKKVVRLKGGDPFIFGRGGEELQVAASAGIPFQVVPGITAAIGATAYAGIPLTHREHSQSITFITGHCREKGNELDWPALARGHQTLVIYMGTVKAALISHQLILHGRAEDTPVAVIGCGTRLEQQVLTGTLLELEQLAQQAPSPALLVVGEVAQLHHQIAWFGQQSIAKISRPAVVDFA.

Residues M1–L203 are precorrin-2 dehydrogenase /sirohydrochlorin ferrochelatase. Residues E22–V23 and P43–E44 each bind NAD(+). S128 is subject to Phosphoserine. The interval G214–A470 is uroporphyrinogen-III C-methyltransferase. P223 lines the S-adenosyl-L-methionine pocket. The active-site Proton acceptor is D246. The active-site Proton donor is the K268. S-adenosyl-L-methionine contacts are provided by residues G299–D301, I304, T329–A330, M381, and G410.

This sequence in the N-terminal section; belongs to the precorrin-2 dehydrogenase / sirohydrochlorin ferrochelatase family. It in the C-terminal section; belongs to the precorrin methyltransferase family.

It carries out the reaction uroporphyrinogen III + 2 S-adenosyl-L-methionine = precorrin-2 + 2 S-adenosyl-L-homocysteine + H(+). It catalyses the reaction precorrin-2 + NAD(+) = sirohydrochlorin + NADH + 2 H(+). The enzyme catalyses siroheme + 2 H(+) = sirohydrochlorin + Fe(2+). It functions in the pathway cofactor biosynthesis; adenosylcobalamin biosynthesis; precorrin-2 from uroporphyrinogen III: step 1/1. The protein operates within cofactor biosynthesis; adenosylcobalamin biosynthesis; sirohydrochlorin from precorrin-2: step 1/1. It participates in porphyrin-containing compound metabolism; siroheme biosynthesis; precorrin-2 from uroporphyrinogen III: step 1/1. Its pathway is porphyrin-containing compound metabolism; siroheme biosynthesis; siroheme from sirohydrochlorin: step 1/1. It functions in the pathway porphyrin-containing compound metabolism; siroheme biosynthesis; sirohydrochlorin from precorrin-2: step 1/1. Its function is as follows. Multifunctional enzyme that catalyzes the SAM-dependent methylations of uroporphyrinogen III at position C-2 and C-7 to form precorrin-2 via precorrin-1. Then it catalyzes the NAD-dependent ring dehydrogenation of precorrin-2 to yield sirohydrochlorin. Finally, it catalyzes the ferrochelation of sirohydrochlorin to yield siroheme. The chain is Siroheme synthase from Photorhabdus laumondii subsp. laumondii (strain DSM 15139 / CIP 105565 / TT01) (Photorhabdus luminescens subsp. laumondii).